Here is a 365-residue protein sequence, read N- to C-terminus: Chorismate synthase (365 aa).

A disordered region spans residues 41-61 (IQKELDRRRPGQSEVSTPRHE). An NADP(+)-binding site is contributed by Arg48. Residues 125-127 (RSS), Gly285, 300-304 (KPTPS), and Arg327 each bind FMN.

The protein belongs to the chorismate synthase family. The cofactor is FMNH2.

It carries out the reaction 5-O-(1-carboxyvinyl)-3-phosphoshikimate = chorismate + phosphate. It functions in the pathway metabolic intermediate biosynthesis; chorismate biosynthesis; chorismate from D-erythrose 4-phosphate and phosphoenolpyruvate: step 7/7. Catalyzes the anti-1,4-elimination of the C-3 phosphate and the C-6 proR hydrogen from 5-enolpyruvylshikimate-3-phosphate (EPSP) to yield chorismate, which is the branch point compound that serves as the starting substrate for the three terminal pathways of aromatic amino acid biosynthesis. This reaction introduces a second double bond into the aromatic ring system. The sequence is that of Chorismate synthase from Methanosarcina barkeri (strain Fusaro / DSM 804).